We begin with the raw amino-acid sequence, 368 residues long: Propane 2-monooxygenase, hydroxylase component small subunit (368 aa).

Belongs to the TmoE/XamoE family. In terms of assembly, the propane 2-monooxygenase multicomponent enzyme system is composed of an electron transfer component and a monooxygenase component interacting with the effector protein PrmD. The electron transfer component is composed of a reductase (PrmB), and the monooxygenase component is formed by a large subunit (PrmA) and a small subunit (PrmC). Probably requires the presence of the chaperonin-like protein PrmG to ensure a productive folding, resulting of a soluble PrmC, which leads to the active form of PrmABCD.

The catalysed reaction is propane + NADH + O2 + H(+) = propan-2-ol + NAD(+) + H2O. Its function is as follows. Component of the propane 2-monooxygenase multicomponent enzyme system which is involved in the degradation of propane via the O2-dependent hydroxylation of propane. Also able to catalyze the oxidation the water contaminant N-nitrosodimethylamine (NDMA). This is Propane 2-monooxygenase, hydroxylase component small subunit from Rhodococcus jostii (strain RHA1).